Here is a 213-residue protein sequence, read N- to C-terminus: BAG family molecular chaperone regulator 6, mitochondrial (213 aa).

Residues 53-82 (DDAAAARIQAAFRGHLVRRHAAAVRGADDE) form the IQ domain. The BAG domain maps to 75-152 (AVRGADDEAT…GLQEVFDAVL (78 aa)).

As to quaternary structure, interacts with CAM1-1 under normal conditions. Dissociation of the interaction when calcium-CAM1-1 binding increases under saline-alkaline stress.

Its subcellular location is the mitochondrion. Functionally, co-chaperone that regulates stress responses. Acts as a negative regulator of saline-alkaline stress tolerance. May participate in stress response through regulating the homeostasis of iron, manganese and zinc ions. The chain is BAG family molecular chaperone regulator 6, mitochondrial from Oryza sativa subsp. japonica (Rice).